Reading from the N-terminus, the 293-residue chain is tRNA pseudouridine synthase B (293 aa).

Aspartate 39 serves as the catalytic Nucleophile.

This sequence belongs to the pseudouridine synthase TruB family. Type 1 subfamily.

It catalyses the reaction uridine(55) in tRNA = pseudouridine(55) in tRNA. Its function is as follows. Responsible for synthesis of pseudouridine from uracil-55 in the psi GC loop of transfer RNAs. The sequence is that of tRNA pseudouridine synthase B from Streptococcus mutans serotype c (strain ATCC 700610 / UA159).